The primary structure comprises 128 residues: Protein BEX1 (128 aa).

A disordered region spans residues 1–37 (MESKEKRAVNNLSMENTNQENEEKEEKEQVANKGEPL). Ser-105 is subject to Phosphoserine. The interval 107 to 128 (SLRAVSTDPPHHDHHDEFCLMP) is disordered. Residues 115–128 (PPHHDHHDEFCLMP) show a composition bias toward basic and acidic residues. Residues 117–121 (HHDHH) are his cluster. Residue Cys-125 coordinates Zn(2+).

It belongs to the BEX family. As to quaternary structure, interacts with neurotrophin receptor p75NTR/NGFR. Interacts with OMP. Phosphorylated. Phosphorylation of Ser-105 protects it from the proteasome. Post-translationally, ubiquitinated. Degraded by the proteasome.

The protein localises to the nucleus. It localises to the cytoplasm. Functionally, signaling adapter molecule involved in p75NTR/NGFR signaling. Plays a role in cell cycle progression and neuronal differentiation. Inhibits neuronal differentiation in response to nerve growth factor (NGF). May act as a link between the cell cycle and neurotrophic factor signaling, possibly by functioning as an upstream modulator of receptor signaling, coordinating biological responses to external signals with internal cellular states. In absence of reductive stress, acts as a pseudosubstrate for the CRL2(FEM1B) complex: associates with FEM1B via zinc, thereby preventing association between FEM1B and its substrates. This Macaca fascicularis (Crab-eating macaque) protein is Protein BEX1 (BEX1).